A 372-amino-acid polypeptide reads, in one-letter code: Queuine tRNA-ribosyltransferase (372 aa).

D89 serves as the catalytic Proton acceptor. Substrate is bound by residues 89 to 93 (DSGGF), D161, and G232. Positions 262 to 268 (GIGDLPS) are RNA binding. The active-site Nucleophile is D281. The interval 286–290 (TKAAR) is RNA binding; important for wobble base 34 recognition. The Zn(2+) site is built by C319, C321, C324, and H351.

This sequence belongs to the queuine tRNA-ribosyltransferase family. Homodimer. Within each dimer, one monomer is responsible for RNA recognition and catalysis, while the other monomer binds to the replacement base PreQ1. Zn(2+) is required as a cofactor.

The enzyme catalyses 7-aminomethyl-7-carbaguanine + guanosine(34) in tRNA = 7-aminomethyl-7-carbaguanosine(34) in tRNA + guanine. The protein operates within tRNA modification; tRNA-queuosine biosynthesis. Catalyzes the base-exchange of a guanine (G) residue with the queuine precursor 7-aminomethyl-7-deazaguanine (PreQ1) at position 34 (anticodon wobble position) in tRNAs with GU(N) anticodons (tRNA-Asp, -Asn, -His and -Tyr). Catalysis occurs through a double-displacement mechanism. The nucleophile active site attacks the C1' of nucleotide 34 to detach the guanine base from the RNA, forming a covalent enzyme-RNA intermediate. The proton acceptor active site deprotonates the incoming PreQ1, allowing a nucleophilic attack on the C1' of the ribose to form the product. After dissociation, two additional enzymatic reactions on the tRNA convert PreQ1 to queuine (Q), resulting in the hypermodified nucleoside queuosine (7-(((4,5-cis-dihydroxy-2-cyclopenten-1-yl)amino)methyl)-7-deazaguanosine). The polypeptide is Queuine tRNA-ribosyltransferase (Chlamydia muridarum (strain MoPn / Nigg)).